Consider the following 31-residue polypeptide: Electron transfer flavoprotein-ubiquinone oxidoreductase (31 aa).

11–25 (VVIVGAGGAGLSAAI) is a binding site for FAD.

Monomer. It depends on [4Fe-4S] cluster as a cofactor. Requires FAD as cofactor.

It catalyses the reaction a ubiquinone + reduced [electron-transfer flavoprotein] = a ubiquinol + oxidized [electron-transfer flavoprotein] + H(+). Accepts electrons from ETF and reduces ubiquinone. In Paracoccus denitrificans, this protein is Electron transfer flavoprotein-ubiquinone oxidoreductase.